The following is a 544-amino-acid chain: Chaperonin GroEL 2 (544 aa).

ATP is bound by residues 30 to 33 (TLGP), Lys51, 87 to 91 (DGTTT), Gly415, and Asp496.

It belongs to the chaperonin (HSP60) family. In terms of assembly, forms a cylinder of 14 subunits composed of two heptameric rings stacked back-to-back. Interacts with the co-chaperonin GroES.

It is found in the cytoplasm. The enzyme catalyses ATP + H2O + a folded polypeptide = ADP + phosphate + an unfolded polypeptide.. Functionally, together with its co-chaperonin GroES, plays an essential role in assisting protein folding. The GroEL-GroES system forms a nano-cage that allows encapsulation of the non-native substrate proteins and provides a physical environment optimized to promote and accelerate protein folding. The sequence is that of Chaperonin GroEL 2 from Rhizobium johnstonii (strain DSM 114642 / LMG 32736 / 3841) (Rhizobium leguminosarum bv. viciae).